We begin with the raw amino-acid sequence, 195 residues long: Imidazoleglycerol-phosphate dehydratase (195 aa).

Belongs to the imidazoleglycerol-phosphate dehydratase family.

Its subcellular location is the cytoplasm. It catalyses the reaction D-erythro-1-(imidazol-4-yl)glycerol 3-phosphate = 3-(imidazol-4-yl)-2-oxopropyl phosphate + H2O. The protein operates within amino-acid biosynthesis; L-histidine biosynthesis; L-histidine from 5-phospho-alpha-D-ribose 1-diphosphate: step 6/9. This chain is Imidazoleglycerol-phosphate dehydratase, found in Cupriavidus pinatubonensis (strain JMP 134 / LMG 1197) (Cupriavidus necator (strain JMP 134)).